The sequence spans 154 residues: MPELCPCGSGLEYSACCEPYVNGTQTPATPGLLMRSRFSAYVKHNVDYLIATWHPDCHATEWRNAIVDSFKNTEWLGLTVVEEKQGHEAGEGFVEFIAQFVDGNTGERQAMHERSRFLQIDQRWYYIDGTKPQPGRNAICPCGSGKKYKKCCGR.

This sequence belongs to the UPF0225 family.

This chain is UPF0225 protein Spro_2712, found in Serratia proteamaculans (strain 568).